Here is an 878-residue protein sequence, read N- to C-terminus: Aconitate hydratase A (878 aa).

[4Fe-4S] cluster is bound by residues C426, C492, and C495.

The protein belongs to the aconitase/IPM isomerase family. In terms of assembly, monomer. Requires [4Fe-4S] cluster as cofactor.

It carries out the reaction citrate = D-threo-isocitrate. It catalyses the reaction (2S,3R)-3-hydroxybutane-1,2,3-tricarboxylate = 2-methyl-cis-aconitate + H2O. Its pathway is carbohydrate metabolism; tricarboxylic acid cycle; isocitrate from oxaloacetate: step 2/2. The protein operates within organic acid metabolism; propanoate degradation. Its function is as follows. Involved in the catabolism of short chain fatty acids (SCFA) via the tricarboxylic acid (TCA)(acetyl degradation route) and probably the 2-methylcitrate cycle I (propionate degradation route). Catalyzes the reversible isomerization of citrate to isocitrate via cis-aconitate. Could catalyze the hydration of 2-methyl-cis-aconitate to yield (2R,3S)-2-methylisocitrate. The apo form of AcnA functions as a RNA-binding regulatory protein. In Rickettsia prowazekii (strain Madrid E), this protein is Aconitate hydratase A (acnA).